The following is a 278-amino-acid chain: Pca operon regulatory protein (278 aa).

In terms of domain architecture, HTH iclR-type spans 31–91 (VAGISKGMAI…SDGHYFYLTP (61 aa)). The H-T-H motif DNA-binding region spans 53 to 72 (ITMAAEKTGMTRAAARRHLL). The IclR-ED domain maps to 106–278 (LPKISQPLLN…ETARELRNIL (173 aa)).

In terms of biological role, activates transcription of the pca operon. The chain is Pca operon regulatory protein (pcaU) from Acinetobacter baylyi (strain ATCC 33305 / BD413 / ADP1).